Reading from the N-terminus, the 660-residue chain is Bifunctional polymyxin resistance protein ArnA (660 aa).

The segment at 1–304 is formyltransferase ArnAFT; it reads MKTVVFAYHD…TLGLVQGSRL (304 aa). Position 86-88 (86-88) interacts with (6R)-10-formyltetrahydrofolate; sequence HLI. Residue H104 is the Proton donor; for formyltransferase activity of the active site. Residues R114 and 136-140 each bind (6R)-10-formyltetrahydrofolate; that span reads VKRAD. The interval 314-660 is dehydrogenase ArnADH; sequence RRTRVLILGV…RTVDLTDKPS (347 aa). NAD(+)-binding positions include D347 and 368 to 369; that span reads DI. UDP-alpha-D-glucuronate contacts are provided by residues A393, Y398, and 432 to 433; that span reads TS. Residue E434 is the Proton acceptor; for decarboxylase activity of the active site. UDP-alpha-D-glucuronate-binding positions include R460, N492, 526-535, and Y613; that span reads KLIDGGKQKR. The Proton donor; for decarboxylase activity role is filled by R619.

In the N-terminal section; belongs to the Fmt family. UDP-L-Ara4N formyltransferase subfamily. This sequence in the C-terminal section; belongs to the NAD(P)-dependent epimerase/dehydratase family. UDP-glucuronic acid decarboxylase subfamily. In terms of assembly, homohexamer, formed by a dimer of trimers.

The catalysed reaction is UDP-alpha-D-glucuronate + NAD(+) = UDP-beta-L-threo-pentopyranos-4-ulose + CO2 + NADH. The enzyme catalyses UDP-4-amino-4-deoxy-beta-L-arabinose + (6R)-10-formyltetrahydrofolate = UDP-4-deoxy-4-formamido-beta-L-arabinose + (6S)-5,6,7,8-tetrahydrofolate + H(+). The protein operates within nucleotide-sugar biosynthesis; UDP-4-deoxy-4-formamido-beta-L-arabinose biosynthesis; UDP-4-deoxy-4-formamido-beta-L-arabinose from UDP-alpha-D-glucuronate: step 1/3. Its pathway is nucleotide-sugar biosynthesis; UDP-4-deoxy-4-formamido-beta-L-arabinose biosynthesis; UDP-4-deoxy-4-formamido-beta-L-arabinose from UDP-alpha-D-glucuronate: step 3/3. It functions in the pathway bacterial outer membrane biogenesis; lipopolysaccharide biosynthesis. Its function is as follows. Bifunctional enzyme that catalyzes the oxidative decarboxylation of UDP-glucuronic acid (UDP-GlcUA) to UDP-4-keto-arabinose (UDP-Ara4O) and the addition of a formyl group to UDP-4-amino-4-deoxy-L-arabinose (UDP-L-Ara4N) to form UDP-L-4-formamido-arabinose (UDP-L-Ara4FN). The modified arabinose is attached to lipid A and is required for resistance to polymyxin and cationic antimicrobial peptides. The chain is Bifunctional polymyxin resistance protein ArnA from Escherichia coli O6:H1 (strain CFT073 / ATCC 700928 / UPEC).